A 227-amino-acid polypeptide reads, in one-letter code: Urease accessory protein UreF (227 aa).

Belongs to the UreF family. In terms of assembly, ureD, UreF and UreG form a complex that acts as a GTP-hydrolysis-dependent molecular chaperone, activating the urease apoprotein by helping to assemble the nickel containing metallocenter of UreC. The UreE protein probably delivers the nickel.

It is found in the cytoplasm. Required for maturation of urease via the functional incorporation of the urease nickel metallocenter. This Shewanella halifaxensis (strain HAW-EB4) protein is Urease accessory protein UreF.